Here is a 78-residue protein sequence, read N- to C-terminus: Exodeoxyribonuclease 7 small subunit (78 aa).

The protein belongs to the XseB family. As to quaternary structure, heterooligomer composed of large and small subunits.

The protein resides in the cytoplasm. The enzyme catalyses Exonucleolytic cleavage in either 5'- to 3'- or 3'- to 5'-direction to yield nucleoside 5'-phosphates.. In terms of biological role, bidirectionally degrades single-stranded DNA into large acid-insoluble oligonucleotides, which are then degraded further into small acid-soluble oligonucleotides. The protein is Exodeoxyribonuclease 7 small subunit of Synechococcus sp. (strain JA-3-3Ab) (Cyanobacteria bacterium Yellowstone A-Prime).